Here is a 118-residue protein sequence, read N- to C-terminus: Acetylcholine receptor subunit beta (118 aa).

The N-terminal stretch at 1-15 is a signal peptide; that stretch reads APTVALLLLCALCSA.

Belongs to the ligand-gated ion channel (TC 1.A.9) family. Acetylcholine receptor (TC 1.A.9.1) subfamily. Beta-1/CHRNB1 sub-subfamily. As to quaternary structure, pentamer of two alpha chains, and one each of the beta, delta, and gamma chains.

The protein resides in the postsynaptic cell membrane. Its subcellular location is the cell membrane. The catalysed reaction is K(+)(in) = K(+)(out). It catalyses the reaction Na(+)(in) = Na(+)(out). Functionally, after binding acetylcholine, the AChR responds by an extensive change in conformation that affects all subunits and leads to opening of an ion-conducting channel across the plasma membrane. The protein is Acetylcholine receptor subunit beta (CHRNB1) of Gallus gallus (Chicken).